Reading from the N-terminus, the 330-residue chain is Peptide transport system ATP-binding protein SapD (330 aa).

The 254-residue stretch at 6 to 259 folds into the ABC transporter domain; the sequence is IRNLTIEFKT…PHHPYTQALI (254 aa). An ATP-binding site is contributed by 40–47; that stretch reads GESGSGKS.

It belongs to the ABC transporter superfamily.

The protein localises to the cell inner membrane. Involved in a peptide intake transport system that plays a role in the resistance to antimicrobial peptides. The sequence is that of Peptide transport system ATP-binding protein SapD from Salmonella typhimurium (strain LT2 / SGSC1412 / ATCC 700720).